We begin with the raw amino-acid sequence, 468 residues long: Proline--tRNA ligase (468 aa).

Belongs to the class-II aminoacyl-tRNA synthetase family. ProS type 3 subfamily. In terms of assembly, homodimer.

Its subcellular location is the cytoplasm. It catalyses the reaction tRNA(Pro) + L-proline + ATP = L-prolyl-tRNA(Pro) + AMP + diphosphate. In terms of biological role, catalyzes the attachment of proline to tRNA(Pro) in a two-step reaction: proline is first activated by ATP to form Pro-AMP and then transferred to the acceptor end of tRNA(Pro). This Frankia casuarinae (strain DSM 45818 / CECT 9043 / HFP020203 / CcI3) protein is Proline--tRNA ligase.